Here is a 136-residue protein sequence, read N- to C-terminus: Large ribosomal subunit protein uL16 (136 aa).

It belongs to the universal ribosomal protein uL16 family. Part of the 50S ribosomal subunit.

Its function is as follows. Binds 23S rRNA and is also seen to make contacts with the A and possibly P site tRNAs. The sequence is that of Large ribosomal subunit protein uL16 from Shigella flexneri.